Here is a 382-residue protein sequence, read N- to C-terminus: UDP-N-acetylenolpyruvoylglucosamine reductase (382 aa).

Residues 50–253 (RVGGPAVLAE…REAVLRLRAS (204 aa)) form the FAD-binding PCMH-type domain. Arg-193 is an active-site residue. Residue Ser-270 is the Proton donor of the active site. Glu-374 is a catalytic residue.

Belongs to the MurB family. Requires FAD as cofactor.

The protein localises to the cytoplasm. The enzyme catalyses UDP-N-acetyl-alpha-D-muramate + NADP(+) = UDP-N-acetyl-3-O-(1-carboxyvinyl)-alpha-D-glucosamine + NADPH + H(+). Its pathway is cell wall biogenesis; peptidoglycan biosynthesis. Cell wall formation. This Nocardia farcinica (strain IFM 10152) protein is UDP-N-acetylenolpyruvoylglucosamine reductase.